The sequence spans 175 residues: FMN reductase (NADH) RutF (175 aa).

This sequence belongs to the non-flavoprotein flavin reductase family. RutF subfamily.

The catalysed reaction is FMNH2 + NAD(+) = FMN + NADH + 2 H(+). Its function is as follows. Catalyzes the reduction of FMN to FMNH2 which is used to reduce pyrimidine by RutA via the Rut pathway. This is FMN reductase (NADH) RutF from Serratia proteamaculans (strain 568).